Here is a 730-residue protein sequence, read N- to C-terminus: Cyclin-T2 (730 aa).

Residues 1–300 (MASGRGASSR…SVTGVPTNPS (300 aa)) form an interaction with MDFIC and MDFI region. Residues 12–147 (FFTREQLENT…IMLQTLGFEI (136 aa)) form the Cyclin N-terminal domain. The segment at 250–300 (RLKKIRNWRANQAARKPKVDGQVSETPLLGSSLVQNSILVDSVTGVPTNPS) is interaction with POLR2A. Polar residues-rich tracts occupy residues 341-350 (TSYGLSSHQE) and 360-389 (TEQLYSQKQETSLSGSQYNINFQQGPSISL). Positions 341 to 430 (TSYGLSSHQE…GPISTTPGII (90 aa)) are disordered. Residues 398–412 (DKISDHSSVKQEYTH) are compositionally biased toward basic and acidic residues. Residue K407 forms a Glycyl lysine isopeptide (Lys-Gly) (interchain with G-Cter in SUMO2) linkage. A Phosphoserine modification is found at S480. A disordered region spans residues 497–652 (DKKEKSGSLK…SSSSSSSSVK (156 aa)). Composition is skewed to basic and acidic residues over residues 517–543 (SASKEELKMKIKVSSSERHSSSDEGSG) and 552–565 (ISRDHKEKHKEHPS). Positions 566–578 (SRHHTSSHKHSHS) are enriched in basic residues. Over residues 579 to 588 (HSGSSSGGSK) the composition is skewed to low complexity. S601 carries the post-translational modification Phosphoserine. Composition is skewed to low complexity over residues 606–616 (SSDGISSSSSS) and 637–652 (SSKSSGSSSSSSSSVK).

The protein belongs to the cyclin family. Cyclin C subfamily. As to quaternary structure, interacts with CDK9 to form P-TEFb. Interacts with POLR2A (via the C-terminal domain (CTD)); mediates transcriptional activity. Interacts with HEXIM1; mediates formation of a tripartite complex with KPNA2. Interacts with HEXIM2. Interacts with PKN1; enhances MYOD1-dependent transcription. P-TEFB complex interacts with RB1; promotes phosphorylation of RB1. P-TEFB complex interacts with MYOD1; promotes the transcriptional activity of MYOD1 through its CDK9-mediated phosphorylation. Interacts with MDFI and MDFIC. Interacts with MON1B; down-regulates CCNT2-mediated activation of viral promoters during herpes simplex virus 1/HHV-1 infection. (Microbial infection) Interacts with HIV-2 and SIV Tat. Does not bind efficiently to the transactivation domain of the HIV-1 Tat. In terms of tissue distribution, ubiquitously expressed.

Its subcellular location is the cytoplasm. It is found in the perinuclear region. The protein resides in the nucleus. In terms of biological role, regulatory subunit of the cyclin-dependent kinase pair (CDK9/cyclin T) complex, also called positive transcription elongation factor B (P-TEFB), which is proposed to facilitate the transition from abortive to production elongation by phosphorylating the CTD (carboxy-terminal domain) of the large subunit of RNA polymerase II (RNAP II). The activity of this complex is regulated by binding with 7SK snRNA. Plays a role during muscle differentiation; P-TEFB complex interacts with MYOD1; this tripartite complex promotes the transcriptional activity of MYOD1 through its CDK9-mediated phosphorylation and binds the chromatin of promoters and enhancers of muscle-specific genes; this event correlates with hyperphosphorylation of the CTD domain of RNA pol II. In addition, enhances MYOD1-dependent transcription through interaction with PKN1. Involved in early embryo development. Functionally, (Microbial infection) Promotes transcriptional activation of early and late herpes simplex virus 1/HHV-1 promoters. In Homo sapiens (Human), this protein is Cyclin-T2.